A 142-amino-acid chain; its full sequence is Large ribosomal subunit protein uL11 (142 aa).

This sequence belongs to the universal ribosomal protein uL11 family. Part of the ribosomal stalk of the 50S ribosomal subunit. Interacts with L10 and the large rRNA to form the base of the stalk. L10 forms an elongated spine to which L12 dimers bind in a sequential fashion forming a multimeric L10(L12)X complex. One or more lysine residues are methylated.

In terms of biological role, forms part of the ribosomal stalk which helps the ribosome interact with GTP-bound translation factors. This Proteus vulgaris protein is Large ribosomal subunit protein uL11.